Consider the following 366-residue polypeptide: Histidinol-phosphate aminotransferase (366 aa).

K222 bears the N6-(pyridoxal phosphate)lysine mark.

The protein belongs to the class-II pyridoxal-phosphate-dependent aminotransferase family. Histidinol-phosphate aminotransferase subfamily. Homodimer. Pyridoxal 5'-phosphate serves as cofactor.

The catalysed reaction is L-histidinol phosphate + 2-oxoglutarate = 3-(imidazol-4-yl)-2-oxopropyl phosphate + L-glutamate. It functions in the pathway amino-acid biosynthesis; L-histidine biosynthesis; L-histidine from 5-phospho-alpha-D-ribose 1-diphosphate: step 7/9. The polypeptide is Histidinol-phosphate aminotransferase (Lysinibacillus sphaericus (strain C3-41)).